The primary structure comprises 203 residues: Orotate phosphoribosyltransferase (203 aa).

Residues arginine 94, lysine 95, lysine 98, histidine 100, and 119-127 (DDVATTGGS) contribute to the 5-phospho-alpha-D-ribose 1-diphosphate site. The orotate site is built by threonine 123 and arginine 151.

This sequence belongs to the purine/pyrimidine phosphoribosyltransferase family. PyrE subfamily. As to quaternary structure, homodimer. It depends on Mg(2+) as a cofactor.

It carries out the reaction orotidine 5'-phosphate + diphosphate = orotate + 5-phospho-alpha-D-ribose 1-diphosphate. It participates in pyrimidine metabolism; UMP biosynthesis via de novo pathway; UMP from orotate: step 1/2. Functionally, catalyzes the transfer of a ribosyl phosphate group from 5-phosphoribose 1-diphosphate to orotate, leading to the formation of orotidine monophosphate (OMP). The sequence is that of Orotate phosphoribosyltransferase from Staphylothermus marinus (strain ATCC 43588 / DSM 3639 / JCM 9404 / F1).